A 442-amino-acid chain; its full sequence is tRNA modification GTPase MnmE (442 aa).

Residues Arg27, Glu84, and Lys124 each contribute to the (6S)-5-formyl-5,6,7,8-tetrahydrofolate site. The TrmE-type G domain occupies Gly221–Glu366. Residues Asn231 to Ser236, Ser250 to Thr256, and Asp275 to Gly278 each bind GTP. Positions 235 and 256 each coordinate Mg(2+). Residue Lys442 coordinates (6S)-5-formyl-5,6,7,8-tetrahydrofolate.

This sequence belongs to the TRAFAC class TrmE-Era-EngA-EngB-Septin-like GTPase superfamily. TrmE GTPase family. In terms of assembly, homodimer. Heterotetramer of two MnmE and two MnmG subunits. Requires K(+) as cofactor.

It is found in the cytoplasm. In terms of biological role, exhibits a very high intrinsic GTPase hydrolysis rate. Involved in the addition of a carboxymethylaminomethyl (cmnm) group at the wobble position (U34) of certain tRNAs, forming tRNA-cmnm(5)s(2)U34. This chain is tRNA modification GTPase MnmE, found in Brucella ovis (strain ATCC 25840 / 63/290 / NCTC 10512).